We begin with the raw amino-acid sequence, 652 residues long: DNA mismatch repair protein MutL (652 aa).

It belongs to the DNA mismatch repair MutL/HexB family.

In terms of biological role, this protein is involved in the repair of mismatches in DNA. It is required for dam-dependent methyl-directed DNA mismatch repair. May act as a 'molecular matchmaker', a protein that promotes the formation of a stable complex between two or more DNA-binding proteins in an ATP-dependent manner without itself being part of a final effector complex. This is DNA mismatch repair protein MutL from Aliivibrio salmonicida (strain LFI1238) (Vibrio salmonicida (strain LFI1238)).